Consider the following 523-residue polypeptide: Solute carrier family 2, facilitated glucose transporter member 2 (523 aa).

Topologically, residues 1–10 are cytoplasmic; it reads MSEDKITGTL. A helical membrane pass occupies residues 11 to 31; the sequence is AFTVFTAVLSSFQFGYDIGVI. Residues 32 to 97 are Extracellular-facing; that stretch reads NAPQEVIISH…SAHIVTMLWS (66 aa). Asparagine 62 carries an N-linked (GlcNAc...) asparagine glycan. A helical membrane pass occupies residues 98-118; it reads LSVSSFAVGGMVASFFGGWLG. The Cytoplasmic portion of the chain corresponds to 119 to 126; sequence DKLGRIKA. The helical transmembrane segment at 127 to 147 threads the bilayer; the sequence is MLAANSLSLTGALLMGCSKFG. Residues 148–157 are Extracellular-facing; sequence PAHALIIAGR. A helical transmembrane segment spans residues 158–178; the sequence is SVSGLYCGLISGLVPMYIGEI. Over 179–186 the chain is Cytoplasmic; it reads APTTLRGA. Residues 187-207 form a helical membrane-spanning segment; that stretch reads LGTLHQLALVTGILISQIAGL. Glutamine 192 lines the D-glucose pocket. The Extracellular segment spans residues 208 to 216; that stretch reads SFILGNQDH. Residues 217–237 traverse the membrane as a helical segment; sequence WHILLGLSAVPALLQCLLLLF. The Cytoplasmic portion of the chain corresponds to 238–302; it reads CPESPRYLYI…LFTDANYRQP (65 aa). The chain crosses the membrane as a helical span at residues 303-323; the sequence is ILVALMLHMAQQFSGINGIFY. Residues 313 to 314 and asparagine 319 each bind D-glucose; that span reads QQ. At 324–337 the chain is on the extracellular side; sequence YSTSIFQTAGISQP. A helical transmembrane segment spans residues 338 to 358; sequence VYATIGVGAINMIFTAVSVLL. Asparagine 348 is a D-glucose binding site. At 359-367 the chain is on the cytoplasmic side; it reads VEKAGRRTL. The chain crosses the membrane as a helical span at residues 368–388; the sequence is FLTGMIGMFFCTIFMSVGLVL. Topologically, residues 389-401 are extracellular; the sequence is LDKFAWMSYVSMT. Residues 402–422 form a helical membrane-spanning segment; sequence AIFLFVSFFEIGPGPIPWFMV. D-glucose-binding residues include glutamate 411 and tryptophan 419. Residues 423 to 432 are Cytoplasmic-facing; that stretch reads AEFFSQGPRP. A helical transmembrane segment spans residues 433-453; that stretch reads TALALAAFSNWVCNFVIALCF. At 454-460 the chain is on the extracellular side; it reads QYIADFL. A helical transmembrane segment spans residues 461-481; it reads GPYVFFLFAGVVLVFTLFTFF. The Cytoplasmic portion of the chain corresponds to 482–523; sequence KVPETKGKSFEEIAAEFRKKSGSAPPRKAAVQMEFLASSESV. Phosphoserine is present on serine 522.

It belongs to the major facilitator superfamily. Sugar transporter (TC 2.A.1.1) family. Glucose transporter subfamily. N-glycosylated; required for stability and retention at the cell surface of pancreatic beta cells. In embryo, expressed in endoderm layer of yolk sac and liver primordium.

It is found in the cell membrane. The enzyme catalyses D-glucose(out) = D-glucose(in). It catalyses the reaction D-fructose(out) = D-fructose(in). The catalysed reaction is L-dehydroascorbate(out) = L-dehydroascorbate(in). It carries out the reaction D-galactose(in) = D-galactose(out). With respect to regulation, D-glucose and maltose competitively inhibit fructose transport. D-glucose, D-fructose and maltose inhibit deoxyglucose transport. Functionally, facilitative hexose transporter that mediates the transport of glucose, fructose and galactose. Likely mediates the bidirectional transfer of glucose across the plasma membrane of hepatocytes and is responsible for uptake of glucose by the beta cells; may comprise part of the glucose-sensing mechanism of the beta cell. May also participate with the Na(+)/glucose cotransporter in the transcellular transport of glucose in the small intestine and kidney. Also able to mediate the transport of dehydroascorbate. The polypeptide is Solute carrier family 2, facilitated glucose transporter member 2 (Mus musculus (Mouse)).